The chain runs to 214 residues: 3,4-dihydroxy-2-butanone 4-phosphate synthase (214 aa).

D-ribulose 5-phosphate-binding positions include 37–38 (RE), D42, 150–154 (RRGHT), and E174. E38 serves as a coordination point for Mg(2+). H153 lines the Mg(2+) pocket.

It belongs to the DHBP synthase family. As to quaternary structure, homodimer. The cofactor is Mg(2+). Requires Mn(2+) as cofactor.

It carries out the reaction D-ribulose 5-phosphate = (2S)-2-hydroxy-3-oxobutyl phosphate + formate + H(+). Its pathway is cofactor biosynthesis; riboflavin biosynthesis; 2-hydroxy-3-oxobutyl phosphate from D-ribulose 5-phosphate: step 1/1. In terms of biological role, catalyzes the conversion of D-ribulose 5-phosphate to formate and 3,4-dihydroxy-2-butanone 4-phosphate. This is 3,4-dihydroxy-2-butanone 4-phosphate synthase from Nitratidesulfovibrio vulgaris (strain ATCC 29579 / DSM 644 / CCUG 34227 / NCIMB 8303 / VKM B-1760 / Hildenborough) (Desulfovibrio vulgaris).